The primary structure comprises 498 residues: ATP synthase subunit beta, chloroplastic (498 aa).

172-179 contacts ATP; sequence GGAGVGKT.

The protein belongs to the ATPase alpha/beta chains family. In terms of assembly, F-type ATPases have 2 components, CF(1) - the catalytic core - and CF(0) - the membrane proton channel. CF(1) has five subunits: alpha(3), beta(3), gamma(1), delta(1), epsilon(1). CF(0) has four main subunits: a(1), b(1), b'(1) and c(9-12).

The protein localises to the plastid. The protein resides in the chloroplast thylakoid membrane. It catalyses the reaction ATP + H2O + 4 H(+)(in) = ADP + phosphate + 5 H(+)(out). Functionally, produces ATP from ADP in the presence of a proton gradient across the membrane. The catalytic sites are hosted primarily by the beta subunits. This chain is ATP synthase subunit beta, chloroplastic, found in Buxus microphylla (Littleleaf boxwood).